The primary structure comprises 233 residues: MLIPIPALNDNYIWVYKRENLSVIVIDIPEIAALSQFIQAQNLVIGALLITHNHRDHIGALAEFKQFYPHVHIYGPAECADQGVTQVIDAGRLIIDEYHIDVLPTGGHTAQHLSFLIDGHLFCGDTLFSAGCGRVFTGDYSQMFTSLQLLKSLPDETIVCPAHEYTLGNLAFALTTGKNKSAVQKQLEKVKKLRAENKPSLPTTLALEKQINPFLQVESLDEFIELRKAKDVF.

Residues H52, H54, D56, H57, H108, D125, and H163 each coordinate Zn(2+).

It belongs to the metallo-beta-lactamase superfamily. Glyoxalase II family. In terms of assembly, monomer. Requires Zn(2+) as cofactor.

It carries out the reaction an S-(2-hydroxyacyl)glutathione + H2O = a 2-hydroxy carboxylate + glutathione + H(+). Its pathway is secondary metabolite metabolism; methylglyoxal degradation; (R)-lactate from methylglyoxal: step 2/2. In terms of biological role, thiolesterase that catalyzes the hydrolysis of S-D-lactoyl-glutathione to form glutathione and D-lactic acid. This chain is Hydroxyacylglutathione hydrolase, found in Histophilus somni (strain 129Pt) (Haemophilus somnus).